Consider the following 316-residue polypeptide: Coproporphyrin III ferrochelatase (316 aa).

Fe-coproporphyrin III is bound by residues tyrosine 13, arginine 30, 46 to 47 (RY), serine 54, and tyrosine 125. The Fe(2+) site is built by histidine 183 and glutamate 264.

Belongs to the ferrochelatase family.

The protein localises to the cytoplasm. It carries out the reaction Fe-coproporphyrin III + 2 H(+) = coproporphyrin III + Fe(2+). It functions in the pathway porphyrin-containing compound metabolism; protoheme biosynthesis. Its function is as follows. Involved in coproporphyrin-dependent heme b biosynthesis. Catalyzes the insertion of ferrous iron into coproporphyrin III to form Fe-coproporphyrin III. The protein is Coproporphyrin III ferrochelatase of Geobacillus thermodenitrificans (strain NG80-2).